The chain runs to 373 residues: MTSRFPAIAANITKLFAARNTHAVEVAILQPADPFLDMAGEDLRRRIFLTESETGQTLCLRPEFTIPVCLDHISSQAGTPRRYSYLGEVFRQRREGGNEFFQAGIEDLGDRDTAQADARSVADAHALLSLVLPGRSLAVTLGDQGIFEAVLAALGLPRGWRMRLARAFGSAPMLQAALADLANPPRNGQLSGEVAALVLDGDLDGLSTHIAGGMEQAGLSASAGRSPTDIARRLIEKAELRSVRLSNEAFAALKNFLAIHVPLDGAARALETFAAGAGLSLGAALEKFAARAKAIEAHGLPAEKIRYDAAFGRPLDYYTGVVFEIAAQGGERPLAGGGRYDRLLTLLGAKTAIPGVGFSVWLDRIEALREAAP.

The protein belongs to the class-II aminoacyl-tRNA synthetase family. HisZ subfamily. As to quaternary structure, heteromultimer composed of HisG and HisZ subunits.

The protein localises to the cytoplasm. Its pathway is amino-acid biosynthesis; L-histidine biosynthesis; L-histidine from 5-phospho-alpha-D-ribose 1-diphosphate: step 1/9. Required for the first step of histidine biosynthesis. May allow the feedback regulation of ATP phosphoribosyltransferase activity by histidine. The protein is ATP phosphoribosyltransferase regulatory subunit (hisZ) of Mesorhizobium japonicum (strain LMG 29417 / CECT 9101 / MAFF 303099) (Mesorhizobium loti (strain MAFF 303099)).